Consider the following 142-residue polypeptide: Large-conductance mechanosensitive channel (142 aa).

3 helical membrane-spanning segments follow: residues 14-34, 38-58, and 82-102; these read VMDLAVGVIIGAAFTKIVTSV, LVMPIVGAITGGGFDFSNYFL, and GSFITVLINFMILAWIIFLLV.

Belongs to the MscL family. As to quaternary structure, homopentamer.

The protein resides in the cell inner membrane. In terms of biological role, channel that opens in response to stretch forces in the membrane lipid bilayer. May participate in the regulation of osmotic pressure changes within the cell. This Sinorhizobium fredii (strain NBRC 101917 / NGR234) protein is Large-conductance mechanosensitive channel.